The chain runs to 347 residues: S-adenosylmethionine decarboxylase proenzyme (347 aa).

Active-site residues include Glu10 and Glu13. The active-site Schiff-base intermediate with substrate; via pyruvic acid is the Ser66. Ser66 carries the post-translational modification Pyruvic acid (Ser); by autocatalysis. The active-site Proton donor; for catalytic activity is the Cys80. Active-site proton acceptor; for processing activity residues include Ser237 and His251.

The protein belongs to the eukaryotic AdoMetDC family. The cofactor is pyruvate. In terms of processing, is synthesized initially as an inactive proenzyme. Formation of the active enzyme involves a self-maturation process in which the active site pyruvoyl group is generated from an internal serine residue via an autocatalytic post-translational modification. Two non-identical subunits are generated from the proenzyme in this reaction, and the pyruvate is formed at the N-terminus of the alpha chain, which is derived from the carboxyl end of the proenzyme. The post-translation cleavage follows an unusual pathway, termed non-hydrolytic serinolysis, in which the side chain hydroxyl group of the serine supplies its oxygen atom to form the C-terminus of the beta chain, while the remainder of the serine residue undergoes an oxidative deamination to produce ammonia and the pyruvoyl group blocking the N-terminus of the alpha chain.

The enzyme catalyses S-adenosyl-L-methionine + H(+) = S-adenosyl 3-(methylsulfanyl)propylamine + CO2. It functions in the pathway amine and polyamine biosynthesis; S-adenosylmethioninamine biosynthesis; S-adenosylmethioninamine from S-adenosyl-L-methionine: step 1/1. The protein is S-adenosylmethionine decarboxylase proenzyme (SamDC) of Drosophila melanogaster (Fruit fly).